The sequence spans 168 residues: Protein OPG162 (168 aa).

Residues 15–37 (LSVPAAIMMLLSTIISGIGTFLH) form a helical membrane-spanning segment. 2 cysteine pairs are disulfide-bonded: Cys75/Cys162 and Cys141/Cys154. N-linked (GlcNAc...) asparagine; by host glycosylation is present at Asn133.

Belongs to the orthopoxvirus OPG162 protein family. As to quaternary structure, interacts with protein OPG161. Interacts with protein OPG164. Interacts with protein OPG190.

The protein resides in the virion membrane. The protein localises to the host Golgi apparatus. In terms of biological role, forms a complex with OPG162 and OPG190 to coordinate the incorporation of OPG164 into wrapped enveloped virion (EV) membranes and, subsequently, the production of actin tails. Therefore plays an essential role in efficient cell-to-cell spread of viral particles. This is Protein OPG162 (OPG162) from Monkeypox virus.